The primary structure comprises 168 residues: 6,7-dimethyl-8-ribityllumazine synthase (168 aa).

5-amino-6-(D-ribitylamino)uracil contacts are provided by residues phenylalanine 24, 58-60 (ALE), and 82-84 (AVI). Position 87–88 (87–88 (ET)) interacts with (2S)-2-hydroxy-3-oxobutyl phosphate. Catalysis depends on histidine 90, which acts as the Proton donor. Residue asparagine 115 coordinates 5-amino-6-(D-ribitylamino)uracil. Residue arginine 129 coordinates (2S)-2-hydroxy-3-oxobutyl phosphate.

The protein belongs to the DMRL synthase family.

The enzyme catalyses (2S)-2-hydroxy-3-oxobutyl phosphate + 5-amino-6-(D-ribitylamino)uracil = 6,7-dimethyl-8-(1-D-ribityl)lumazine + phosphate + 2 H2O + H(+). The protein operates within cofactor biosynthesis; riboflavin biosynthesis; riboflavin from 2-hydroxy-3-oxobutyl phosphate and 5-amino-6-(D-ribitylamino)uracil: step 1/2. Functionally, catalyzes the formation of 6,7-dimethyl-8-ribityllumazine by condensation of 5-amino-6-(D-ribitylamino)uracil with 3,4-dihydroxy-2-butanone 4-phosphate. This is the penultimate step in the biosynthesis of riboflavin. This Paraburkholderia phytofirmans (strain DSM 17436 / LMG 22146 / PsJN) (Burkholderia phytofirmans) protein is 6,7-dimethyl-8-ribityllumazine synthase.